The following is a 260-amino-acid chain: 6-carboxyhexanoate--CoA ligase (260 aa).

Belongs to the BioW family. Homodimer. It depends on Mg(2+) as a cofactor.

The enzyme catalyses heptanedioate + ATP + CoA = 6-carboxyhexanoyl-CoA + AMP + diphosphate. It functions in the pathway metabolic intermediate metabolism; pimeloyl-CoA biosynthesis; pimeloyl-CoA from pimelate: step 1/1. In terms of biological role, catalyzes the transformation of pimelate into pimeloyl-CoA with concomitant hydrolysis of ATP to AMP. The polypeptide is 6-carboxyhexanoate--CoA ligase (Fibrobacter succinogenes (strain ATCC 19169 / S85)).